The chain runs to 261 residues: uncharacterized protein (261 aa).

Its subcellular location is the plastid. It localises to the chloroplast. This is an uncharacterized protein from Mesostigma viride (Green alga).